The chain runs to 362 residues: Ribosomal RNA large subunit methyltransferase M (362 aa).

S-adenosyl-L-methionine-binding positions include serine 194, 227 to 230 (CPGG), aspartate 246, aspartate 266, and aspartate 284. Lysine 313 (proton acceptor) is an active-site residue.

The protein belongs to the class I-like SAM-binding methyltransferase superfamily. RNA methyltransferase RlmE family. RlmM subfamily. Monomer.

The protein resides in the cytoplasm. The catalysed reaction is cytidine(2498) in 23S rRNA + S-adenosyl-L-methionine = 2'-O-methylcytidine(2498) in 23S rRNA + S-adenosyl-L-homocysteine + H(+). Its function is as follows. Catalyzes the 2'-O-methylation at nucleotide C2498 in 23S rRNA. The sequence is that of Ribosomal RNA large subunit methyltransferase M from Aggregatibacter aphrophilus (strain NJ8700) (Haemophilus aphrophilus).